Consider the following 1060-residue polypeptide: Carbamoyl phosphate synthase large chain (1060 aa).

Residues 1–401 (MPKRTDIRKI…SLLKAVRSLE (401 aa)) are carboxyphosphate synthetic domain. Residues Arg-129, Arg-169, Gly-175, Gly-176, Gln-208, Ile-210, Glu-215, Gly-241, Ile-242, His-243, Gln-284, and Glu-298 each coordinate ATP. The ATP-grasp 1 domain occupies 133–327 (KNLMNQLNEP…IAKMAAKIAV (195 aa)). Residues Gln-284, Glu-298, and Asn-300 each contribute to the Mg(2+) site. Mn(2+) contacts are provided by Gln-284, Glu-298, and Asn-300. Positions 402-546 (IGTAHLELDG…YTTYEQENES (145 aa)) are oligomerization domain. Residues 547-929 (LVSAKPSILV…ALYKAFEASG (383 aa)) form a carbamoyl phosphate synthetic domain region. One can recognise an ATP-grasp 2 domain in the interval 671–861 (DQLIQELNIP…MAQLATQLIL (191 aa)). Arg-707, Arg-746, Leu-748, Glu-752, Gly-777, Val-778, His-779, Ser-780, Gln-820, and Glu-832 together coordinate ATP. Mg(2+)-binding residues include Gln-820, Glu-832, and Asn-834. Residues Gln-820, Glu-832, and Asn-834 each coordinate Mn(2+). One can recognise an MGS-like domain in the interval 930–1060 (MHLPSHGNVL…ESQSLLTKPL (131 aa)). The allosteric domain stretch occupies residues 930–1060 (MHLPSHGNVL…ESQSLLTKPL (131 aa)).

The protein belongs to the CarB family. In terms of assembly, composed of two chains; the small (or glutamine) chain promotes the hydrolysis of glutamine to ammonia, which is used by the large (or ammonia) chain to synthesize carbamoyl phosphate. Tetramer of heterodimers (alpha,beta)4. Requires Mg(2+) as cofactor. Mn(2+) is required as a cofactor.

The catalysed reaction is hydrogencarbonate + L-glutamine + 2 ATP + H2O = carbamoyl phosphate + L-glutamate + 2 ADP + phosphate + 2 H(+). The enzyme catalyses hydrogencarbonate + NH4(+) + 2 ATP = carbamoyl phosphate + 2 ADP + phosphate + 2 H(+). Its pathway is amino-acid biosynthesis; L-arginine biosynthesis; carbamoyl phosphate from bicarbonate: step 1/1. The protein operates within pyrimidine metabolism; UMP biosynthesis via de novo pathway; (S)-dihydroorotate from bicarbonate: step 1/3. Functionally, large subunit of the glutamine-dependent carbamoyl phosphate synthetase (CPSase). CPSase catalyzes the formation of carbamoyl phosphate from the ammonia moiety of glutamine, carbonate, and phosphate donated by ATP, constituting the first step of 2 biosynthetic pathways, one leading to arginine and/or urea and the other to pyrimidine nucleotides. The large subunit (synthetase) binds the substrates ammonia (free or transferred from glutamine from the small subunit), hydrogencarbonate and ATP and carries out an ATP-coupled ligase reaction, activating hydrogencarbonate by forming carboxy phosphate which reacts with ammonia to form carbamoyl phosphate. This is Carbamoyl phosphate synthase large chain from Latilactobacillus sakei subsp. sakei (strain 23K) (Lactobacillus sakei subsp. sakei).